The sequence spans 318 residues: Homoserine kinase (318 aa).

Residue 97-107 (PIGSGLGSSAC) participates in ATP binding.

This sequence belongs to the GHMP kinase family. Homoserine kinase subfamily.

It is found in the cytoplasm. It catalyses the reaction L-homoserine + ATP = O-phospho-L-homoserine + ADP + H(+). Its pathway is amino-acid biosynthesis; L-threonine biosynthesis; L-threonine from L-aspartate: step 4/5. Catalyzes the ATP-dependent phosphorylation of L-homoserine to L-homoserine phosphate. The chain is Homoserine kinase from Vibrio vulnificus (strain CMCP6).